Consider the following 79-residue polypeptide: UPF0150 protein ssr1765 (79 aa).

Belongs to the UPF0150 family.

This Synechocystis sp. (strain ATCC 27184 / PCC 6803 / Kazusa) protein is UPF0150 protein ssr1765.